A 196-amino-acid polypeptide reads, in one-letter code: Purpurin (196 aa).

Positions methionine 1 to alanine 21 are cleaved as a signal peptide. Intrachain disulfides connect cysteine 24–cysteine 182, cysteine 90–cysteine 196, and cysteine 142–cysteine 151.

This sequence belongs to the calycin superfamily. Lipocalin family.

The protein localises to the secreted. Its subcellular location is the extracellular space. It localises to the extracellular matrix. The protein resides in the interphotoreceptor matrix. In terms of biological role, may be involved in the transport of retinol between the photoreceptors and the pigmented epithelium. This Gallus gallus (Chicken) protein is Purpurin.